A 333-amino-acid polypeptide reads, in one-letter code: Prenyltransferase stbC (333 aa).

8 helical membrane-spanning segments follow: residues 74 to 94 (VAFQ…AGCA), 125 to 145 (ANIF…PLPA), 147 to 164 (CQRL…YPFC), 173 to 193 (VILG…AGLP), 201 to 221 (VPTI…DVVY), 247 to 267 (ILLT…GVLV), 272 to 292 (YFFV…IGGI), and 304 to 324 (SGWF…IEYL).

It belongs to the UbiA prenyltransferase family.

It localises to the membrane. It carries out the reaction orsellinate + (2E,6E)-farnesyl diphosphate = ilicicolinate B + diphosphate. The protein operates within secondary metabolite biosynthesis; terpenoid biosynthesis. Functionally, prenyltransferase; part of the cluster that mediates the biosynthesis of LL-Z1272-beta, also known as ilicicolin B, a prenylated aryl-aldehyde produced by several fungi and that serves as a key pathway intermediate for many fungal meroterpenoids. The first step in the pathway is performed by the non-reducing polyketide synthase stbA that produces orsellinic acid by condensing acetyl-CoA with 3 malonyl-CoA units. The prenyltransferase stbC then prenylates orsenilic acid into grifolic acid. Finally, grifolic acid is reduced to ilicicolin B by the NRPS-like protein stbB. The chain is Prenyltransferase stbC from Stachybotrys bisbyi (Hyalostachybotrys bisbyi).